We begin with the raw amino-acid sequence, 419 residues long: MAPK/MAK/MRK overlapping kinase (419 aa).

Residues 4 to 285 (YKAIGKIGEG…AHQALQHPYF (282 aa)) enclose the Protein kinase domain. Residues 10-18 (IGEGTFSEV) and Lys-33 each bind ATP. Residue Asp-128 is the Proton acceptor of the active site. Disordered stretches follow at residues 285–344 (FQEQ…RGPA) and 390–419 (PASK…KGGR). Composition is skewed to basic and acidic residues over residues 322-338 (KEGR…EDRP) and 393-402 (KKTDPQKDLK).

Belongs to the protein kinase superfamily. CMGC Ser/Thr protein kinase family. CDC2/CDKX subfamily. Requires Mg(2+) as cofactor. Autophosphorylated. In terms of tissue distribution, expressed in heart, brain, lung, kidney, and pancreas, and at very low levels in placenta, liver and skeletal muscle. Detected in retina.

It localises to the cytoplasm. The protein resides in the cell projection. It is found in the cilium. The protein localises to the nucleus. The enzyme catalyses L-seryl-[protein] + ATP = O-phospho-L-seryl-[protein] + ADP + H(+). It catalyses the reaction L-threonyl-[protein] + ATP = O-phospho-L-threonyl-[protein] + ADP + H(+). With respect to regulation, phosphorylation appears to increase the enzymatic activity. Able to phosphorylate several exogenous substrates and to undergo autophosphorylation. Negatively regulates cilium length in a cAMP and mTORC1 signaling-dependent manner. The polypeptide is MAPK/MAK/MRK overlapping kinase (MOK) (Homo sapiens (Human)).